A 318-amino-acid polypeptide reads, in one-letter code: tRNA U34 carboxymethyltransferase (318 aa).

Residues Lys88, Trp102, Lys107, Gly126, 176-177 (LE), Met192, Tyr196, and Arg311 contribute to the carboxy-S-adenosyl-L-methionine site.

It belongs to the class I-like SAM-binding methyltransferase superfamily. CmoB family. As to quaternary structure, homotetramer.

The catalysed reaction is carboxy-S-adenosyl-L-methionine + 5-hydroxyuridine(34) in tRNA = 5-carboxymethoxyuridine(34) in tRNA + S-adenosyl-L-homocysteine + H(+). Catalyzes carboxymethyl transfer from carboxy-S-adenosyl-L-methionine (Cx-SAM) to 5-hydroxyuridine (ho5U) to form 5-carboxymethoxyuridine (cmo5U) at position 34 in tRNAs. This chain is tRNA U34 carboxymethyltransferase, found in Pseudomonas putida (strain W619).